Reading from the N-terminus, the 453-residue chain is Bifunctional protein GlmU (453 aa).

The segment at 1–227 is pyrophosphorylase; the sequence is MAVSVIILAA…SIEVMGVNDR (227 aa). Residues 8 to 11, lysine 22, glutamine 73, 78 to 79, 100 to 102, glycine 137, glutamate 152, asparagine 167, and asparagine 225 each bind UDP-N-acetyl-alpha-D-glucosamine; these read LAAG, GT, and SGD. Aspartate 102 lines the Mg(2+) pocket. Asparagine 225 lines the Mg(2+) pocket. The linker stretch occupies residues 228-248; that stretch reads QQLAYLERFYQKREAARLMGE. The interval 249-453 is N-acetyltransferase; that stretch reads GVSLSDPDRF…WPGWKRPSKK (205 aa). Residues arginine 331 and lysine 349 each contribute to the UDP-N-acetyl-alpha-D-glucosamine site. Catalysis depends on histidine 361, which acts as the Proton acceptor. UDP-N-acetyl-alpha-D-glucosamine contacts are provided by tyrosine 364 and asparagine 375. Acetyl-CoA-binding positions include alanine 378, 384–385, serine 403, alanine 421, and arginine 438; that span reads NY. The tract at residues 430-453 is disordered; sequence PPGELTLSRTPQKSWPGWKRPSKK.

This sequence in the N-terminal section; belongs to the N-acetylglucosamine-1-phosphate uridyltransferase family. The protein in the C-terminal section; belongs to the transferase hexapeptide repeat family. In terms of assembly, homotrimer. Mg(2+) is required as a cofactor.

Its subcellular location is the cytoplasm. The catalysed reaction is alpha-D-glucosamine 1-phosphate + acetyl-CoA = N-acetyl-alpha-D-glucosamine 1-phosphate + CoA + H(+). The enzyme catalyses N-acetyl-alpha-D-glucosamine 1-phosphate + UTP + H(+) = UDP-N-acetyl-alpha-D-glucosamine + diphosphate. Its pathway is nucleotide-sugar biosynthesis; UDP-N-acetyl-alpha-D-glucosamine biosynthesis; N-acetyl-alpha-D-glucosamine 1-phosphate from alpha-D-glucosamine 6-phosphate (route II): step 2/2. The protein operates within nucleotide-sugar biosynthesis; UDP-N-acetyl-alpha-D-glucosamine biosynthesis; UDP-N-acetyl-alpha-D-glucosamine from N-acetyl-alpha-D-glucosamine 1-phosphate: step 1/1. It participates in bacterial outer membrane biogenesis; LPS lipid A biosynthesis. Catalyzes the last two sequential reactions in the de novo biosynthetic pathway for UDP-N-acetylglucosamine (UDP-GlcNAc). The C-terminal domain catalyzes the transfer of acetyl group from acetyl coenzyme A to glucosamine-1-phosphate (GlcN-1-P) to produce N-acetylglucosamine-1-phosphate (GlcNAc-1-P), which is converted into UDP-GlcNAc by the transfer of uridine 5-monophosphate (from uridine 5-triphosphate), a reaction catalyzed by the N-terminal domain. This chain is Bifunctional protein GlmU, found in Nitrosococcus oceani (strain ATCC 19707 / BCRC 17464 / JCM 30415 / NCIMB 11848 / C-107).